Consider the following 100-residue polypeptide: Urease subunit gamma (100 aa).

Belongs to the urease gamma subunit family. As to quaternary structure, heterotrimer of UreA (gamma), UreB (beta) and UreC (alpha) subunits. Three heterotrimers associate to form the active enzyme.

It localises to the cytoplasm. The enzyme catalyses urea + 2 H2O + H(+) = hydrogencarbonate + 2 NH4(+). The protein operates within nitrogen metabolism; urea degradation; CO(2) and NH(3) from urea (urease route): step 1/1. This Actinobacillus pleuropneumoniae serotype 5b (strain L20) protein is Urease subunit gamma.